A 444-amino-acid chain; its full sequence is Trigger factor (444 aa).

The PPIase FKBP-type domain occupies 166 to 251 (GDQIVIDFKG…VKAVKAPKAA (86 aa)).

The protein belongs to the FKBP-type PPIase family. Tig subfamily.

It localises to the cytoplasm. The enzyme catalyses [protein]-peptidylproline (omega=180) = [protein]-peptidylproline (omega=0). Involved in protein export. Acts as a chaperone by maintaining the newly synthesized protein in an open conformation. Functions as a peptidyl-prolyl cis-trans isomerase. The chain is Trigger factor from Paracoccus denitrificans (strain Pd 1222).